Here is a 220-residue protein sequence, read N- to C-terminus: Metalloproteinase inhibitor 2 (220 aa).

Residues 1–26 form the signal peptide; that stretch reads MPGAALPSLLAWLAVLLLGRARPADA. Zn(2+) is bound at residue Cys-27. Involved in metalloproteinase-binding regions lie at residues 27 to 30 and 95 to 96; these read CSCS and TE. Intrachain disulfides connect Cys-27-Cys-98, Cys-29-Cys-127, Cys-39-Cys-152, Cys-154-Cys-201, Cys-159-Cys-164, and Cys-172-Cys-193. Residues 27–152 enclose the NTR domain; sequence CSCSPIHPQQ…SLNQRYQMGC (126 aa).

The protein belongs to the protease inhibitor I35 (TIMP) family. In terms of processing, the activity of TIMP2 is dependent on the presence of disulfide bonds.

It localises to the secreted. In terms of biological role, complexes with metalloproteinases (such as collagenases) and irreversibly inactivates them by binding to their catalytic zinc cofactor. The chain is Metalloproteinase inhibitor 2 (TIMP2) from Gallus gallus (Chicken).